The sequence spans 171 residues: uncharacterized protein (171 aa).

Positions 3-171 constitute a PfpI endopeptidase domain; that stretch reads KKVAIILANE…FNREIVKQLQ (169 aa).

It belongs to the peptidase C56 family.

This is an uncharacterized protein from Staphylococcus aureus (strain COL).